A 426-amino-acid chain; its full sequence is Histidine--tRNA ligase (426 aa).

This sequence belongs to the class-II aminoacyl-tRNA synthetase family. As to quaternary structure, homodimer.

The protein resides in the cytoplasm. It carries out the reaction tRNA(His) + L-histidine + ATP = L-histidyl-tRNA(His) + AMP + diphosphate + H(+). This chain is Histidine--tRNA ligase, found in Streptococcus pyogenes serotype M1.